A 141-amino-acid polypeptide reads, in one-letter code: Large ribosomal subunit protein uL11 (141 aa).

The protein belongs to the universal ribosomal protein uL11 family. Part of the ribosomal stalk of the 50S ribosomal subunit. Interacts with L10 and the large rRNA to form the base of the stalk. L10 forms an elongated spine to which L12 dimers bind in a sequential fashion forming a multimeric L10(L12)X complex. Post-translationally, one or more lysine residues are methylated.

Forms part of the ribosomal stalk which helps the ribosome interact with GTP-bound translation factors. This Thermomicrobium roseum (strain ATCC 27502 / DSM 5159 / P-2) protein is Large ribosomal subunit protein uL11.